The chain runs to 234 residues: Large ribosomal subunit protein uL1 (234 aa).

The protein belongs to the universal ribosomal protein uL1 family. Part of the 50S ribosomal subunit.

In terms of biological role, binds directly to 23S rRNA. The L1 stalk is quite mobile in the ribosome, and is involved in E site tRNA release. Its function is as follows. Protein L1 is also a translational repressor protein, it controls the translation of the L11 operon by binding to its mRNA. In Desulfosudis oleivorans (strain DSM 6200 / JCM 39069 / Hxd3) (Desulfococcus oleovorans), this protein is Large ribosomal subunit protein uL1.